The chain runs to 192 residues: Xanthine phosphoribosyltransferase (192 aa).

Xanthine contacts are provided by leucine 20 and asparagine 27. Alanine 128 to alanine 132 contributes to the 5-phospho-alpha-D-ribose 1-diphosphate binding site. Xanthine is bound at residue lysine 156.

This sequence belongs to the purine/pyrimidine phosphoribosyltransferase family. Xpt subfamily. In terms of assembly, homodimer.

The protein resides in the cytoplasm. The catalysed reaction is XMP + diphosphate = xanthine + 5-phospho-alpha-D-ribose 1-diphosphate. Its pathway is purine metabolism; XMP biosynthesis via salvage pathway; XMP from xanthine: step 1/1. Converts the preformed base xanthine, a product of nucleic acid breakdown, to xanthosine 5'-monophosphate (XMP), so it can be reused for RNA or DNA synthesis. This is Xanthine phosphoribosyltransferase from Lactobacillus gasseri (strain ATCC 33323 / DSM 20243 / BCRC 14619 / CIP 102991 / JCM 1131 / KCTC 3163 / NCIMB 11718 / NCTC 13722 / AM63).